Consider the following 150-residue polypeptide: MTTFLIKHKASGKYFHPKGGTSNPPNGTNLVLHSDIHERMYFQFEVVNERWRYIKHVASEKIVHPFGGKADPLNGTNMVLHQDRHDRALFAMDFFNDNIRHKGGKYIHPKGGSKNPSNGNLTVMHGDEHGAMEFIFVSPKNKDKRVLVYA.

H16 and G19 together coordinate D-galactose. Residue N26 is glycosylated (N-linked (GlcNAc...) asparagine). D-galactose is bound by residues 35-37 (DIH), H64, and G67. Residue N74 is glycosylated (N-linked (GlcNAc...) asparagine). D-galactose-binding positions include 83-85 (DRH), H108, and G111. N118 carries an N-linked (GlcNAc...) asparagine glycan. Residue 127–129 (DEH) coordinates D-galactose.

In terms of assembly, oligomerizes in solution. In terms of processing, the N-terminus is blocked. As to expression, expressed in mantle. Expressed 51 and 1.6 fold in mantle and gonads, respectively, relative to that in hemocytes. Expressed at a much lower level in other tissues tested including gill, muscle and hepatopancreas.

With respect to regulation, hemagglutinating activity does not require Ca(2+) ions. Hemagglutinating activity is inhibited by porcine stomach mucin (PSM), bovine submaxillary mucin (BSM) and fetuin. Agglutination of V.proteolyticus bacteria is inhibited by D-galactose, but not by D-glucose. Fungal binding is inhibited by D-galactose, but not by pathogen-associated molecular patterns (PAMPs) including lipopolysaccharide (LPS), peptidoglycan and beta-glucan. Functionally, D-galactose-binding lectin. Binds both alpha and beta anomer of galactose (Gal). Binds strongly to branched beta-Gal-terminated glycans and weakly to unbranched glycans with alpha-Gal on the end of chains. Has strong affinity for both Gal and GalNAc. Binds glycoproteins containing mucin-type chains. Has hemagglutinating activity towards human group A erythrocytes. Has hemagglutinating activity towards rabbit erythrocytes. Agglutinates V.proteolyticus bacteria. Binds strongly to fungi including species from genera Aspergillus, Alternaria, Fusarium and Haematonectria, and to a lesser extent to fungi from genera Trichoderma. Decreases conidia germination and hyphal growth of fungi. At high concentration, stimulates secretion of cytokines TNF-alpha and IFN-gamma from human peripheral blood cells, and at low concentration reduces hyperexpression of cytokine IL-10 in these cells, indicative of immunomodulatory capability. However, has no effect on IL-4 production. Recognizes pathogen-associated molecular patterns (PAMPs) and binds to peptidoglycan from S.aureus, but has only little binding to beta-1,3-glucan from E.gracilis and lipopolysaccharide (LPS) from E.coli. May be involved in innate immunity acting as an antibacterial or antifungal agent recognizing carbohydrate ligands on the surface of pathogens. The protein is D-galactose-binding lectin of Mytilus trossulus (Blue mussel).